We begin with the raw amino-acid sequence, 2378 residues long: Dimodular nonribosomal peptide synthase (2378 aa).

Carrier domains follow at residues 961–1036 (APRT…DLAQ) and 2036–2111 (GPRT…EMGS). Serine 996 and serine 2071 each carry O-(pantetheine 4'-phosphoryl)serine.

Belongs to the ATP-dependent AMP-binding enzyme family. Pantetheine 4'-phosphate serves as cofactor.

The catalysed reaction is holo-[peptidyl-carrier protein] + L-threonine + ATP = L-threonyl-[peptidyl-carrier protein] + AMP + diphosphate. It carries out the reaction holo-[peptidyl-carrier protein] + glycine + ATP = glycyl-[peptidyl-carrier protein] + AMP + diphosphate. Its pathway is siderophore biosynthesis; bacillibactin biosynthesis. In terms of biological role, specifically adenylates L-threonine and, to a lesser extent, glycine and covalently loads both amino acids onto their corresponding peptidyl carrier domains. This is Dimodular nonribosomal peptide synthase (dhbF) from Bacillus subtilis (strain 168).